A 56-amino-acid polypeptide reads, in one-letter code: Ovomucoid (56 aa).

The 51-residue stretch at 6–56 (VDCSEYPKPECTAEERPICGSDNKTYGNKCNFCNAVVESNGTLTLRNFGKC) folds into the Kazal-like domain. Cystine bridges form between cysteine 8–cysteine 38, cysteine 16–cysteine 35, and cysteine 24–cysteine 56. Residue asparagine 45 is glycosylated (N-linked (GlcNAc...) asparagine).

The protein resides in the secreted. The sequence is that of Ovomucoid from Bambusicola thoracicus (Chinese bamboo-partridge).